The following is a 444-amino-acid chain: Deoxyguanosinetriphosphate triphosphohydrolase-like protein (444 aa).

The interval 1–26 (MTESLWHERRLTEEKKRRNDHRSPYQ) is disordered. The HD domain maps to 59–250 (RLTHSLEVSQ…MELADDIAYA (192 aa)).

The protein belongs to the dGTPase family. Type 2 subfamily.

The polypeptide is Deoxyguanosinetriphosphate triphosphohydrolase-like protein (Shewanella sediminis (strain HAW-EB3)).